Reading from the N-terminus, the 130-residue chain is Small ribosomal subunit protein uS11c (130 aa).

This sequence belongs to the universal ribosomal protein uS11 family. Part of the 30S ribosomal subunit.

Its subcellular location is the plastid. The protein resides in the chloroplast. The polypeptide is Small ribosomal subunit protein uS11c (Marsilea quadrifolia (European water clover)).